A 176-amino-acid polypeptide reads, in one-letter code: NAD(P)H-quinone oxidoreductase subunit 6, chloroplastic (176 aa).

Transmembrane regions (helical) follow at residues 10-30 (FLLVFLGLGLILGGLGVVLLT), 32-52 (PIFSAFSLGLVLVCISLFYIL), 61-81 (AQLLIYVGAINVLILFAVMFM), 95-115 (VGNGLTSLICTSLFVLLITII), and 152-172 (FFLPFEFISIILLVALIGAIA).

It belongs to the complex I subunit 6 family. In terms of assembly, NDH is composed of at least 16 different subunits, 5 of which are encoded in the nucleus.

Its subcellular location is the plastid. It localises to the chloroplast thylakoid membrane. The catalysed reaction is a plastoquinone + NADH + (n+1) H(+)(in) = a plastoquinol + NAD(+) + n H(+)(out). The enzyme catalyses a plastoquinone + NADPH + (n+1) H(+)(in) = a plastoquinol + NADP(+) + n H(+)(out). Its function is as follows. NDH shuttles electrons from NAD(P)H:plastoquinone, via FMN and iron-sulfur (Fe-S) centers, to quinones in the photosynthetic chain and possibly in a chloroplast respiratory chain. The immediate electron acceptor for the enzyme in this species is believed to be plastoquinone. Couples the redox reaction to proton translocation, and thus conserves the redox energy in a proton gradient. This is NAD(P)H-quinone oxidoreductase subunit 6, chloroplastic (ndhG) from Populus alba (White poplar).